We begin with the raw amino-acid sequence, 574 residues long: (R)-mandelonitrile lyase 4 (574 aa).

The first 27 residues, M1–S27, serve as a signal peptide directing secretion. Residue N30 is glycosylated (N-linked (GlcNAc...) asparagine). T64–S65 serves as a coordination point for FAD. N-linked (GlcNAc...) asparagine glycosylation is present at N76. FAD-binding positions include E83–R84, T134, and N138–V141. Residues N146, N151, and N179 are each glycosylated (N-linked (GlcNAc...) asparagine). An FAD-binding site is contributed by V245. N268 and N310 each carry an N-linked (GlcNAc...) asparagine glycan. A substrate-binding site is contributed by C357. 3 N-linked (GlcNAc...) asparagine glycosylation sites follow: N381, N407, and N468. The cysteines at positions 428 and 479 are disulfide-linked. A substrate-binding site is contributed by Y486. FAD is bound by residues W487–H488 and G516. Residue H488 is the Proton donor of the active site. The active-site Proton acceptor is the H526. Residue P527–Q528 participates in FAD binding.

Belongs to the GMC oxidoreductase family. Monomer. The cofactor is FAD.

It is found in the vacuole. Its subcellular location is the aleurone grain. It catalyses the reaction (R)-mandelonitrile = benzaldehyde + hydrogen cyanide. Functionally, involved in cyanogenesis, the release of HCN from injured tissues. Catalyzes the stereospecific addition of HCN to a variety of aldehydes in vitro. It is a major seed constituent, and could have the additional role of a storage form for reduced nitrogen. This is (R)-mandelonitrile lyase 4 (MDL4) from Prunus serotina (Black cherry).